The chain runs to 177 residues: 3-hydroxydecanoyl-[acyl-carrier-protein] dehydratase (177 aa).

H76 is a catalytic residue.

Belongs to the thioester dehydratase family. FabA subfamily. Homodimer.

It localises to the cytoplasm. It catalyses the reaction a (3R)-hydroxyacyl-[ACP] = a (2E)-enoyl-[ACP] + H2O. The catalysed reaction is (3R)-hydroxydecanoyl-[ACP] = (2E)-decenoyl-[ACP] + H2O. It carries out the reaction (2E)-decenoyl-[ACP] = (3Z)-decenoyl-[ACP]. Its pathway is lipid metabolism; fatty acid biosynthesis. In terms of biological role, necessary for the introduction of cis unsaturation into fatty acids. Catalyzes the dehydration of (3R)-3-hydroxydecanoyl-ACP to E-(2)-decenoyl-ACP and then its isomerization to Z-(3)-decenoyl-ACP. Can catalyze the dehydratase reaction for beta-hydroxyacyl-ACPs with saturated chain lengths up to 16:0, being most active on intermediate chain length. The polypeptide is 3-hydroxydecanoyl-[acyl-carrier-protein] dehydratase (Mannheimia succiniciproducens (strain KCTC 0769BP / MBEL55E)).